The primary structure comprises 184 residues: Protein Syd (184 aa).

The protein belongs to the Syd family.

The protein resides in the cell inner membrane. In terms of biological role, interacts with the SecY protein in vivo. May bind preferentially to an uncomplexed state of SecY, thus functioning either as a chelating agent for excess SecY in the cell or as a regulatory factor that negatively controls the translocase function. The polypeptide is Protein Syd (Psychromonas ingrahamii (strain DSM 17664 / CCUG 51855 / 37)).